A 202-amino-acid polypeptide reads, in one-letter code: Ribonuclease HII (202 aa).

Residues 18 to 202 (TYICGVDEAG…FAPVAKLLKQ (185 aa)) enclose the RNase H type-2 domain. 3 residues coordinate a divalent metal cation: D24, E25, and D116.

This sequence belongs to the RNase HII family. Mn(2+) is required as a cofactor. Requires Mg(2+) as cofactor.

The protein resides in the cytoplasm. It carries out the reaction Endonucleolytic cleavage to 5'-phosphomonoester.. Its function is as follows. Endonuclease that specifically degrades the RNA of RNA-DNA hybrids. The polypeptide is Ribonuclease HII (Acholeplasma laidlawii (strain PG-8A)).